The following is a 101-amino-acid chain: MEPIDPNLEPWNHPGSQPKTACNNCYCKQCCYHCQLCFTKKGLGISYGRRKRKQRRRTSESSQNHQDPVPKQPLSQPGGIETGQKKSKKEVESQTTSDQFA.

An interaction with human CREBBP region spans residues 1–24 (MEPIDPNLEPWNHPGSQPKTACNN). Positions 1-48 (MEPIDPNLEPWNHPGSQPKTACNNCYCKQCCYHCQLCFTKKGLGISYG) are transactivation. 3 residues coordinate Zn(2+): C22, C25, and C27. The interval 22-37 (CNNCYCKQCCYHCQLC) is cysteine-rich. Position 28 is an N6-acetyllysine; by host PCAF (K28). C30, H33, C34, and C37 together coordinate Zn(2+). A core region spans residues 38-48 (FTKKGLGISYG). The tract at residues 48-101 (GRRKRKQRRRTSESSQNHQDPVPKQPLSQPGGIETGQKKSKKEVESQTTSDQFA) is disordered. The short motif at 49–57 (RRKRKQRRR) is the Nuclear localization signal, RNA-binding (TAR), and protein transduction element. Residues 49–86 (RRKRKQRRRTSESSQNHQDPVPKQPLSQPGGIETGQKK) are interaction with the host capping enzyme RNGTT. The residue at position 51 (K51) is an N6-acetyllysine; by host EP300 and GCN5L2. R52 carries the asymmetric dimethylarginine; by host PRMT6 modification. K71 participates in a covalent cross-link: Glycyl lysine isopeptide (Lys-Gly) (interchain with G-Cter in ubiquitin).

This sequence belongs to the lentiviruses Tat family. In terms of assembly, interacts with host CCNT1. Associates with the P-TEFb complex composed at least of Tat, P-TEFb (CDK9 and CCNT1), TAR RNA, RNA Pol II. Recruits the HATs CREBBP, TAF1/TFIID, EP300, PCAF and GCN5L2. Interacts with host KAT5/Tip60; this interaction targets the latter to degradation. Interacts with the host deacetylase SIRT1. Interacts with host capping enzyme RNGTT; this interaction stimulates RNGTT. Binds to host KDR, and to the host integrins ITGAV/ITGB3 and ITGA5/ITGB1. Interacts with host KPNB1/importin beta-1 without previous binding to KPNA1/importin alpha-1. Interacts with EIF2AK2. Interacts with host nucleosome assembly protein NAP1L1; this interaction may be required for the transport of Tat within the nucleus, since the two proteins interact at the nuclear rim. Interacts with host C1QBP/SF2P32; this interaction involves lysine-acetylated Tat. Interacts with the host chemokine receptors CCR2, CCR3 and CXCR4. Interacts with host DPP4/CD26; this interaction may trigger an anti-proliferative effect. Interacts with host LDLR. Interacts with the host extracellular matrix metalloproteinase MMP1. Interacts with host PRMT6; this interaction mediates Tat's methylation. Interacts with, and is ubiquitinated by MDM2/Hdm2. Interacts with host PSMC3 and HTATIP2. Interacts with STAB1; this interaction may overcome SATB1-mediated repression of IL2 and IL2RA (interleukin) in T cells by binding to the same domain than HDAC1. Interacts (when acetylated) with human CDK13, thereby increasing HIV-1 mRNA splicing and promoting the production of the doubly spliced HIV-1 protein Nef. Interacts with host TBP; this interaction modulates the activity of transcriptional pre-initiation complex. Interacts with host RELA. In terms of processing, asymmetrical arginine methylation by host PRMT6 seems to diminish the transactivation capacity of Tat and affects the interaction with host CCNT1. Polyubiquitination by host MDM2 does not target Tat to degradation, but activates its transactivation function and fosters interaction with CCNT1 and TAR RNA. Post-translationally, phosphorylated by EIF2AK2 on serine and threonine residues adjacent to the basic region important for TAR RNA binding and function. Phosphorylation of Tat by EIF2AK2 is dependent on the prior activation of EIF2AK2 by dsRNA.

The protein resides in the host nucleus. Its subcellular location is the host nucleolus. The protein localises to the host cytoplasm. It is found in the secreted. Functionally, transcriptional activator that increases RNA Pol II processivity, thereby increasing the level of full-length viral transcripts. Recognizes a hairpin structure at the 5'-LTR of the nascent viral mRNAs referred to as the transactivation responsive RNA element (TAR) and recruits the cyclin T1-CDK9 complex (P-TEFb complex) that will in turn hyperphosphorylate the RNA polymerase II to allow efficient elongation. The CDK9 component of P-TEFb and other Tat-activated kinases hyperphosphorylate the C-terminus of RNA Pol II that becomes stabilized and much more processive. Other factors such as HTATSF1/Tat-SF1, SUPT5H/SPT5, and HTATIP2 are also important for Tat's function. Besides its effect on RNA Pol II processivity, Tat induces chromatin remodeling of proviral genes by recruiting the histone acetyltransferases (HATs) CREBBP, EP300 and PCAF to the chromatin. This also contributes to the increase in proviral transcription rate, especially when the provirus integrates in transcriptionally silent region of the host genome. To ensure maximal activation of the LTR, Tat mediates nuclear translocation of NF-kappa-B by interacting with host RELA. Through its interaction with host TBP, Tat may also modulate transcription initiation. Tat can reactivate a latently infected cell by penetrating in it and transactivating its LTR promoter. In the cytoplasm, Tat is thought to act as a translational activator of HIV-1 mRNAs. Extracellular circulating Tat can be endocytosed by surrounding uninfected cells via the binding to several surface receptors such as CD26, CXCR4, heparan sulfate proteoglycans (HSPG) or LDLR. Neurons are rarely infected, but they internalize Tat via their LDLR. Through its interaction with nuclear HATs, Tat is potentially able to control the acetylation-dependent cellular gene expression. Modulates the expression of many cellular genes involved in cell survival, proliferation or in coding for cytokines or cytokine receptors. Tat plays a role in T-cell and neurons apoptosis. Tat induced neurotoxicity and apoptosis probably contribute to neuroAIDS. Circulating Tat also acts as a chemokine-like and/or growth factor-like molecule that binds to specific receptors on the surface of the cells, affecting many cellular pathways. In the vascular system, Tat binds to ITGAV/ITGB3 and ITGA5/ITGB1 integrins dimers at the surface of endothelial cells and competes with bFGF for heparin-binding sites, leading to an excess of soluble bFGF. The chain is Protein Tat from Pan troglodytes (Chimpanzee).